The chain runs to 148 residues: Lysozyme-like protein 6 (148 aa).

Residues 1–19 form the signal peptide; it reads MLKALFICVASCLLVVNDG. The region spanning 20-148 is the C-type lysozyme domain; that stretch reads NIIHRCSLAK…SYWMTGCHLG (129 aa). 4 disulfide bridges follow: Cys-25-Cys-145, Cys-49-Cys-133, Cys-83-Cys-98, and Cys-94-Cys-112. The active site involves Glu-54. N-linked (GlcNAc...) asparagine glycosylation is present at Asn-58. Asp-71 is an active-site residue.

It belongs to the glycosyl hydrolase 22 family. In terms of assembly, monomer. As to expression, expressed strongly in testis and epididymis and weakly in seminal vesicle, vas deferens, kidney and spleen. Highly expressed in primary spermatocytes and round spermatids (at protein level).

It is found in the secreted. The protein localises to the cell surface. It localises to the cell projection. The protein resides in the cilium. Its subcellular location is the flagellum. The enzyme catalyses Hydrolysis of (1-&gt;4)-beta-linkages between N-acetylmuramic acid and N-acetyl-D-glucosamine residues in a peptidoglycan and between N-acetyl-D-glucosamine residues in chitodextrins.. In terms of biological role, may be involved sperm-egg plasma membrane adhesion and fusion during fertilization. Exhibits bacteriolytic activity in vitro against Micrococcus luteus and Staphylococcus aureus. Shows weak bacteriolytic activity against Gram-positive bacteria at physiological pH. Bacteriolytic activity is pH-dependent, with a maximum at around pH 5.6. In Mus musculus (Mouse), this protein is Lysozyme-like protein 6 (Lyzl6).